We begin with the raw amino-acid sequence, 623 residues long: Lethal(3)malignant brain tumor-like protein 4 (623 aa).

Residues 1–44 (MKQPNRKRKLNMDSKERLDQDGRLEQAEEEKKPKDSTTPLSHVP) form a disordered region. A compositionally biased stretch (basic and acidic residues) spans 10–35 (LNMDSKERLDQDGRLEQAEEEKKPKD). MBT repeat units follow at residues 52–152 (WSWE…LHIP), 160–260 (FVWM…LIAP), and 269–364 (FSWT…LEVP). A CCHHC-type zinc finger spans residues 370-414 (LKILPGQAVCPTPGCRGIGHIRGPRYSGHHSAFGCPYSDMNLKKE). Zn(2+) is bound by residues C379, C384, H398, and C404. Residues 543 to 607 (WTVDEVAEFV…YNSILMFRHS (65 aa)) form the SAM domain.

It is found in the nucleus. Putative Polycomb group (PcG) protein. PcG proteins maintain the transcriptionally repressive state of genes, probably via a modification of chromatin, rendering it heritably changed in its expressibility. This chain is Lethal(3)malignant brain tumor-like protein 4 (L3MBTL4), found in Homo sapiens (Human).